The following is a 267-amino-acid chain: Glutamate 5-kinase (267 aa).

Lysine 18 contributes to the ATP binding site. The substrate site is built by serine 58, aspartate 145, and asparagine 157. Residues 177–178 and 219–225 contribute to the ATP site; these read SD and TGGMATK.

Belongs to the glutamate 5-kinase family.

It localises to the cytoplasm. The enzyme catalyses L-glutamate + ATP = L-glutamyl 5-phosphate + ADP. Its pathway is amino-acid biosynthesis; L-proline biosynthesis; L-glutamate 5-semialdehyde from L-glutamate: step 1/2. Its function is as follows. Catalyzes the transfer of a phosphate group to glutamate to form L-glutamate 5-phosphate. This is Glutamate 5-kinase from Clostridium tetani (strain Massachusetts / E88).